The primary structure comprises 91 residues: Small ribosomal subunit protein uS15 (91 aa).

This sequence belongs to the universal ribosomal protein uS15 family. As to quaternary structure, part of the 30S ribosomal subunit. Forms a bridge to the 50S subunit in the 70S ribosome, contacting the 23S rRNA.

In terms of biological role, one of the primary rRNA binding proteins, it binds directly to 16S rRNA where it helps nucleate assembly of the platform of the 30S subunit by binding and bridging several RNA helices of the 16S rRNA. Forms an intersubunit bridge (bridge B4) with the 23S rRNA of the 50S subunit in the ribosome. The protein is Small ribosomal subunit protein uS15 of Rickettsia peacockii (strain Rustic).